The sequence spans 322 residues: Arginase-1 (322 aa).

The residue at position 17 (Lys17) is an N6-succinyllysine. 2 positions are modified to phosphoserine: Ser62 and Ser72. An N6-succinyllysine modification is found at Lys75. Mn(2+)-binding residues include His101, Asp124, His126, and Asp128. Substrate contacts are provided by residues 126–130 (HTDIN) and 137–139 (SGN). Ser163 carries the post-translational modification Phosphoserine. A substrate-binding site is contributed by Asp183. Ser217 is subject to Phosphoserine. Mn(2+) is bound by residues Asp232 and Asp234. Substrate is bound by residues Thr246 and Glu277.

Belongs to the arginase family. Homotrimer. Interacts with CMTM6. Mn(2+) serves as cofactor. In terms of tissue distribution, within the immune system initially reported to be selectively expressed in granulocytes (polymorphonuclear leukocytes [PMNs]). Also detected in macrophages mycobacterial granulomas. Expressed in group2 innate lymphoid cells (ILC2s) during lung disease.

It is found in the cytoplasm. It localises to the cytoplasmic granule. The catalysed reaction is L-arginine + H2O = urea + L-ornithine. The protein operates within nitrogen metabolism; urea cycle; L-ornithine and urea from L-arginine: step 1/1. Functionally, key element of the urea cycle converting L-arginine to urea and L-ornithine, which is further metabolized into metabolites proline and polyamides that drive collagen synthesis and bioenergetic pathways critical for cell proliferation, respectively; the urea cycle takes place primarily in the liver and, to a lesser extent, in the kidneys. Its function is as follows. Functions in L-arginine homeostasis in nonhepatic tissues characterized by the competition between nitric oxide synthase (NOS) and arginase for the available intracellular substrate arginine. Arginine metabolism is a critical regulator of innate and adaptive immune responses. Involved in an antimicrobial effector pathway in polymorphonuclear granulocytes (PMN). Upon PMN cell death is liberated from the phagolysosome and depletes arginine in the microenvironment leading to suppressed T cell and natural killer (NK) cell proliferation and cytokine secretion. In group 2 innate lymphoid cells (ILC2s) promotes acute type 2 inflammation in the lung and is involved in optimal ILC2 proliferation but not survival. In humans, the immunological role in the monocytic/macrophage/dendritic cell (DC) lineage is unsure. This is Arginase-1 (ARG1) from Homo sapiens (Human).